A 216-amino-acid polypeptide reads, in one-letter code: Chaperone protein TorD (216 aa).

The protein belongs to the TorD/DmsD family. TorD subfamily.

It localises to the cytoplasm. Its function is as follows. Involved in the biogenesis of TorA. Acts on TorA before the insertion of the molybdenum cofactor and, as a result, probably favors a conformation of the apoenzyme that is competent for acquiring the cofactor. This Photobacterium profundum (strain SS9) protein is Chaperone protein TorD.